A 313-amino-acid chain; its full sequence is Porphobilinogen deaminase (313 aa).

Position 242 is an S-(dipyrrolylmethanemethyl)cysteine (cysteine 242).

It belongs to the HMBS family. Monomer. Dipyrromethane is required as a cofactor.

It catalyses the reaction 4 porphobilinogen + H2O = hydroxymethylbilane + 4 NH4(+). The protein operates within porphyrin-containing compound metabolism; protoporphyrin-IX biosynthesis; coproporphyrinogen-III from 5-aminolevulinate: step 2/4. Tetrapolymerization of the monopyrrole PBG into the hydroxymethylbilane pre-uroporphyrinogen in several discrete steps. This Klebsiella pneumoniae (strain 342) protein is Porphobilinogen deaminase.